Reading from the N-terminus, the 314-residue chain is Coiled-coil domain-containing protein 42 like-2 (314 aa).

2 coiled-coil regions span residues 34–139 (RLLE…RQEK) and 175–233 (NKLL…WESR).

The protein belongs to the CFAP73 family.

The protein is Coiled-coil domain-containing protein 42 like-2 of Xenopus laevis (African clawed frog).